Here is a 271-residue protein sequence, read N- to C-terminus: Imidazole glycerol phosphate synthase subunit HisF (271 aa).

Active-site residues include D12 and D136.

The protein belongs to the HisA/HisF family. In terms of assembly, heterodimer of HisH and HisF.

It localises to the cytoplasm. The catalysed reaction is 5-[(5-phospho-1-deoxy-D-ribulos-1-ylimino)methylamino]-1-(5-phospho-beta-D-ribosyl)imidazole-4-carboxamide + L-glutamine = D-erythro-1-(imidazol-4-yl)glycerol 3-phosphate + 5-amino-1-(5-phospho-beta-D-ribosyl)imidazole-4-carboxamide + L-glutamate + H(+). It functions in the pathway amino-acid biosynthesis; L-histidine biosynthesis; L-histidine from 5-phospho-alpha-D-ribose 1-diphosphate: step 5/9. In terms of biological role, IGPS catalyzes the conversion of PRFAR and glutamine to IGP, AICAR and glutamate. The HisF subunit catalyzes the cyclization activity that produces IGP and AICAR from PRFAR using the ammonia provided by the HisH subunit. The sequence is that of Imidazole glycerol phosphate synthase subunit HisF from Natronomonas pharaonis (strain ATCC 35678 / DSM 2160 / CIP 103997 / JCM 8858 / NBRC 14720 / NCIMB 2260 / Gabara) (Halobacterium pharaonis).